We begin with the raw amino-acid sequence, 393 residues long: DNA-directed RNA polymerase subunit Rpo1C (393 aa).

The protein belongs to the RNA polymerase beta' chain family. Part of the RNA polymerase complex.

Its subcellular location is the cytoplasm. It catalyses the reaction RNA(n) + a ribonucleoside 5'-triphosphate = RNA(n+1) + diphosphate. Its function is as follows. DNA-dependent RNA polymerase (RNAP) catalyzes the transcription of DNA into RNA using the four ribonucleoside triphosphates as substrates. Forms part of the jaw domain. This chain is DNA-directed RNA polymerase subunit Rpo1C, found in Thermococcus celer.